The following is a 143-amino-acid chain: Heat shock protein Hsp-16.41 (143 aa).

The sHSP domain maps to 35–140; sequence HNSFNFSDNI…SSRSIPINFV (106 aa).

This sequence belongs to the small heat shock protein (HSP20) family.

In Caenorhabditis elegans, this protein is Heat shock protein Hsp-16.41 (hsp-16.41).